The following is a 501-amino-acid chain: MSTANNKPAESVSLNAFKQPRAFYLIFSIELWERFGYYGLQGIMAVYLVKQLGMSEADSITLFSSFSALVYGLVAIGGWLGDKVLGTKRVIMLGAIVLAIGYALVAWSGHDAAIVYMGMATIAVGNGLFKANPSSLLSTCYDKNDPRLDGAFTMYYMSINIGSFFSMLATPWLAARFGWSVAFALSVVGMVITIINFAFCQKWVKQYGSKPDFAPVHMGKLLATIAGVVVLVAIATWLLHNQGIARMVLGVVALGIVVIFAKETIGLKGAARRKMIVAFLLMVEAIVFFVLYSQMPTSLNFFAIRNVEHSILGIAFEPEQYQALNPFWIMIGSPILAAIYNKMGDRLPMPHKFAIGMVLCSGAFLVLPLGAKFASDAGIVSVNWLILSYALQSIGELMISGLGLAMVAQLVPQRLMGFIMGSWFLTTAGAAIIAGKIANLMAVPENVTDPLVSLEVYGHVFLQIGIVTAVIAALMLLTAPKLNRMTQDDSADLKARETAAA.

The Cytoplasmic segment spans residues 1-21; it reads MSTANNKPAESVSLNAFKQPR. The chain crosses the membrane as a helical span at residues 22 to 44; it reads AFYLIFSIELWERFGYYGLQGIM. Over 45–59 the chain is Periplasmic; that stretch reads AVYLVKQLGMSEADS. A helical transmembrane segment spans residues 60–80; that stretch reads ITLFSSFSALVYGLVAIGGWL. Topologically, residues 81 to 89 are cytoplasmic; the sequence is GDKVLGTKR. A helical transmembrane segment spans residues 90–110; that stretch reads VIMLGAIVLAIGYALVAWSGH. Position 111 (D111) is a topological domain, periplasmic. Residues 112-132 traverse the membrane as a helical segment; it reads AAIVYMGMATIAVGNGLFKAN. Over 133 to 153 the chain is Cytoplasmic; sequence PSSLLSTCYDKNDPRLDGAFT. The chain crosses the membrane as a helical span at residues 154–174; it reads MYYMSINIGSFFSMLATPWLA. Residues 175-178 are Periplasmic-facing; the sequence is ARFG. A helical membrane pass occupies residues 179–199; sequence WSVAFALSVVGMVITIINFAF. The Cytoplasmic segment spans residues 200 to 218; that stretch reads CQKWVKQYGSKPDFAPVHM. The helical transmembrane segment at 219–239 threads the bilayer; sequence GKLLATIAGVVVLVAIATWLL. Residues 240 to 246 are Periplasmic-facing; that stretch reads HNQGIAR. A helical membrane pass occupies residues 247–267; that stretch reads MVLGVVALGIVVIFAKETIGL. The Cytoplasmic segment spans residues 268-274; it reads KGAARRK. The helical transmembrane segment at 275–295 threads the bilayer; it reads MIVAFLLMVEAIVFFVLYSQM. The Periplasmic segment spans residues 296-320; that stretch reads PTSLNFFAIRNVEHSILGIAFEPEQ. The helical transmembrane segment at 321–341 threads the bilayer; the sequence is YQALNPFWIMIGSPILAAIYN. Over 342-352 the chain is Cytoplasmic; that stretch reads KMGDRLPMPHK. A helical transmembrane segment spans residues 353–373; it reads FAIGMVLCSGAFLVLPLGAKF. Over 374-383 the chain is Periplasmic; the sequence is ASDAGIVSVN. A helical transmembrane segment spans residues 384–404; the sequence is WLILSYALQSIGELMISGLGL. At 405-414 the chain is on the cytoplasmic side; the sequence is AMVAQLVPQR. Residues 415–435 traverse the membrane as a helical segment; the sequence is LMGFIMGSWFLTTAGAAIIAG. At 436 to 459 the chain is on the periplasmic side; it reads KIANLMAVPENVTDPLVSLEVYGH. Residues 460 to 480 form a helical membrane-spanning segment; that stretch reads VFLQIGIVTAVIAALMLLTAP. At 481-501 the chain is on the cytoplasmic side; it reads KLNRMTQDDSADLKARETAAA.

It belongs to the major facilitator superfamily. Proton-dependent oligopeptide transporter (POT/PTR) (TC 2.A.17) family. DtpA subfamily.

The protein localises to the cell inner membrane. Its function is as follows. Proton-dependent permease that transports di- and tripeptides. The polypeptide is Dipeptide and tripeptide permease A (Klebsiella pneumoniae (strain 342)).